The following is a 97-amino-acid chain: Small ribosomal subunit protein bS20 (97 aa).

Residues 1–22 (MANSKSALKRIRTSERNRLRNK) are disordered.

Belongs to the bacterial ribosomal protein bS20 family.

Binds directly to 16S ribosomal RNA. The sequence is that of Small ribosomal subunit protein bS20 from Crocosphaera subtropica (strain ATCC 51142 / BH68) (Cyanothece sp. (strain ATCC 51142)).